A 480-amino-acid chain; its full sequence is MPVSGEAFLGLLPELVATGFLLVVLLGGVFAGPRSEALVAALAGLGTLASFAAAAGLLAAGFSGTFFGGGYAVDPFALYFKLIITATAFFTVIAAARWAERTGDAPEYMTLIIAVALGGMLLVSMRDLFGVFLAVELATIPSYAMVAFDRRRRESAEGGMKYLITGVIASSFLLYGIVLIYGVSGSANLSRVAEAFGEGLSPVAIVGLVLMISGLAFKVSAAPFHFWTPDAYQGAPTSAAAFLSVAPKAAIFAALLRILLDGMPQAAPTWTALMAVIAIVTMFVGNLLALRQSNVRRMLAYSSVAHSGYILAAFAALQGDAVSSGVQAVMIYSAAYAVMNLGAFLTIDLVGEEAKSFNGLFATRPMLAAAMAVFMAALVGIPPLSGFFGKAWVIYAGAGSGSALVYVAVAALVVNSVLSVPYYFGIIRNMFQEEPVSAGGPAKKGDGGVAFTVYAMALLTALFFLGVGPLAALAAGSGLL.

The next 14 helical transmembrane spans lie at 11 to 31 (LLPE…GVFA), 38 to 58 (LVAA…AGLL), 76 to 96 (FALY…IAAA), 105 to 125 (APEY…LVSM), 128 to 148 (LFGV…MVAF), 163 to 183 (LITG…IYGV), 195 to 215 (AFGE…ISGL), 240 to 260 (AAFL…RILL), 270 to 290 (WTAL…LLAL), 298 to 318 (MLAY…AALQ), 329 to 349 (VMIY…TIDL), 368 to 388 (AAAM…SGFF), 407 to 427 (VAVA…FGII), and 453 to 473 (VYAM…LAAL).

The protein belongs to the complex I subunit 2 family. In terms of assembly, NDH-1 is composed of 14 different subunits. Subunits NuoA, H, J, K, L, M, N constitute the membrane sector of the complex.

It is found in the cell membrane. It catalyses the reaction a quinone + NADH + 5 H(+)(in) = a quinol + NAD(+) + 4 H(+)(out). Its function is as follows. NDH-1 shuttles electrons from NADH, via FMN and iron-sulfur (Fe-S) centers, to quinones in the respiratory chain. The immediate electron acceptor for the enzyme in this species is believed to be a menaquinone. Couples the redox reaction to proton translocation (for every two electrons transferred, four hydrogen ions are translocated across the cytoplasmic membrane), and thus conserves the redox energy in a proton gradient. This chain is NADH-quinone oxidoreductase subunit N, found in Rubrobacter xylanophilus (strain DSM 9941 / JCM 11954 / NBRC 16129 / PRD-1).